The sequence spans 138 residues: Translation initiation factor 5A (138 aa).

At Lys-37 the chain carries Hypusine.

It belongs to the eIF-5A family.

The protein resides in the cytoplasm. Functionally, functions by promoting the formation of the first peptide bond. In Pyrococcus furiosus (strain ATCC 43587 / DSM 3638 / JCM 8422 / Vc1), this protein is Translation initiation factor 5A.